A 201-amino-acid chain; its full sequence is Fas apoptotic inhibitory molecule 1 (201 aa).

Belongs to the FAIM1 family.

It is found in the cytoplasm. Plays a role as an inducible effector molecule that mediates Fas resistance produced by surface Ig engagement in B cells. The polypeptide is Fas apoptotic inhibitory molecule 1 (Faim) (Rattus norvegicus (Rat)).